The primary structure comprises 62 residues: Conotoxin Tx5.1 (62 aa).

The signal sequence occupies residues 1 to 22 (MCCLPVFVILLLLIASAPSVDA). The propeptide occupies 23-49 (QPKTKDDVPLAPLHDNAKSALQHLNQR). A Glutamine amide modification is found at Gln-60.

This sequence belongs to the conotoxin T superfamily. In terms of processing, contains 2 disulfide bonds that can be either 'C1-C3, C2-C4' or 'C1-C4, C2-C3', since these disulfide connectivities have been observed for conotoxins with cysteine framework V (for examples, see AC P0DQQ7 and AC P81755). Expressed by the venom duct.

The protein resides in the secreted. The chain is Conotoxin Tx5.1 from Conus textile (Cloth-of-gold cone).